Here is a 288-residue protein sequence, read N- to C-terminus: Carbon monoxide dehydrogenase medium chain (288 aa).

The FAD-binding PCMH-type domain occupies 1–177 (MIPGSFDYHR…TAIRIPVPPT (177 aa)). Residues 32–36 (AGGHS) and 111–115 (TIGGN) each bind FAD.

In terms of assembly, dimer of heterotrimers. Each heterotrimer consists of a large, a medium and a small subunit. The cofactor is FAD.

The catalysed reaction is CO + a quinone + H2O = a quinol + CO2. Catalyzes the oxidation of carbon monoxide to carbon dioxide. This is Carbon monoxide dehydrogenase medium chain (coxM) from Afipia carboxidovorans (strain ATCC 49405 / DSM 1227 / KCTC 32145 / OM5) (Oligotropha carboxidovorans).